A 233-amino-acid chain; its full sequence is 3,4-dihydroxy-2-butanone 4-phosphate synthase (233 aa).

Glutamate 37 is a Mg(2+) binding site. Position 37 (glutamate 37) interacts with Mn(2+). Aspartate 41 is a D-ribulose 5-phosphate binding site. The residue at position 66 (cysteine 66) is an S-glutathionyl cysteine. D-ribulose 5-phosphate is bound by residues threonine 92 and 150–154 (RRGHT). Histidine 153 is a Mg(2+) binding site. Histidine 153 provides a ligand contact to Mn(2+).

Homodimer. Mg(2+) serves as cofactor. The cofactor is Mn(2+). In terms of processing, S-glutathionylation is reversible and dependent on a glutaredoxin.

It carries out the reaction D-ribulose 5-phosphate = (2S)-2-hydroxy-3-oxobutyl phosphate + formate + H(+). The protein operates within cofactor biosynthesis; riboflavin biosynthesis; 2-hydroxy-3-oxobutyl phosphate from D-ribulose 5-phosphate: step 1/1. Its function is as follows. Catalyzes the conversion of D-ribulose 5-phosphate to formate and 3,4-dihydroxy-2-butanone 4-phosphate. This chain is 3,4-dihydroxy-2-butanone 4-phosphate synthase (RIB3), found in Pyricularia oryzae (strain 70-15 / ATCC MYA-4617 / FGSC 8958) (Rice blast fungus).